Reading from the N-terminus, the 872-residue chain is Alanine--tRNA ligase (872 aa).

His-567, His-571, Cys-669, and His-673 together coordinate Zn(2+).

It belongs to the class-II aminoacyl-tRNA synthetase family. Zn(2+) is required as a cofactor.

It is found in the cytoplasm. It catalyses the reaction tRNA(Ala) + L-alanine + ATP = L-alanyl-tRNA(Ala) + AMP + diphosphate. Catalyzes the attachment of alanine to tRNA(Ala) in a two-step reaction: alanine is first activated by ATP to form Ala-AMP and then transferred to the acceptor end of tRNA(Ala). Also edits incorrectly charged Ser-tRNA(Ala) and Gly-tRNA(Ala) via its editing domain. This Streptococcus pyogenes serotype M3 (strain ATCC BAA-595 / MGAS315) protein is Alanine--tRNA ligase.